A 309-amino-acid polypeptide reads, in one-letter code: MEQLLGIKLGCLFALLALTLGCGLTPICFKWFQIDAARGHHRLVLRLLGCISAGVFLGAGFMHMTAEALEEIESQIQKFMVQNRSASERNSSGDADSAHMEYPYGELIISLGFFFVFFLESLALQCCPGAAGGSTVQDEEWGGAHIFELHSHGHLPSPSKGPLRALVLLLSLSFHSVFEGLAVGLQPTVAATVQLCLAVLAHKGLVVFGVGMRLVHLGTSSRWAVFSILLLALMSPLGLAVGLAVTGGDSEGGRGLAQAVLEGVAAGTFLYVTFLEILPRELASPEAPLAKWSCVAAGFAFMAFIALWA.

Topologically, residues 1 to 8 are extracellular; that stretch reads MEQLLGIK. Residues 9-29 traverse the membrane as a helical segment; the sequence is LGCLFALLALTLGCGLTPICF. The Cytoplasmic portion of the chain corresponds to 30–46; that stretch reads KWFQIDAARGHHRLVLR. Residues 47-67 form a helical membrane-spanning segment; sequence LLGCISAGVFLGAGFMHMTAE. The Extracellular portion of the chain corresponds to 68 to 103; sequence ALEEIESQIQKFMVQNRSASERNSSGDADSAHMEYP. The chain crosses the membrane as a helical span at residues 104 to 124; sequence YGELIISLGFFFVFFLESLAL. The Cytoplasmic portion of the chain corresponds to 125 to 164; it reads QCCPGAAGGSTVQDEEWGGAHIFELHSHGHLPSPSKGPLR. A helical transmembrane segment spans residues 165–185; it reads ALVLLLSLSFHSVFEGLAVGL. The Zn(2+) site is built by histidine 175 and glutamate 179. Residues 186–189 lie on the Extracellular side of the membrane; sequence QPTV. Residues 190 to 210 form a helical membrane-spanning segment; sequence AATVQLCLAVLAHKGLVVFGV. Histidine 202 provides a ligand contact to Zn(2+). At 211–224 the chain is on the cytoplasmic side; the sequence is GMRLVHLGTSSRWA. Residues 225 to 245 form a helical membrane-spanning segment; the sequence is VFSILLLALMSPLGLAVGLAV. Topologically, residues 246–258 are extracellular; that stretch reads TGGDSEGGRGLAQ. Residues 259 to 279 form a helical membrane-spanning segment; it reads AVLEGVAAGTFLYVTFLEILP. Residue glutamate 276 coordinates Zn(2+). Topologically, residues 280 to 288 are cytoplasmic; it reads RELASPEAP. The helical transmembrane segment at 289 to 309 threads the bilayer; it reads LAKWSCVAAGFAFMAFIALWA.

It belongs to the ZIP transporter (TC 2.A.5) family. Expressed only in prostate and uterine epithelial cells.

The protein resides in the cell membrane. It carries out the reaction Zn(2+)(in) = Zn(2+)(out). The catalysed reaction is Cd(2+)(in) = Cd(2+)(out). Activity is increased at acidic pH (6.5). Inhibited in the presence of high extracellular K(+). In terms of biological role, transporter for the divalent cation Zn(2+). Mediates the influx of Zn(2+) into cells from extracellular space. The Zn(2+) uniporter activity is independent of H(+)-driving force, but is modulated by extracellular pH and membrane potential. Also transports other divalent cations Zn(2+), Cd2(+), Cu2(+), Co2(+) in the order of decreasing affinity, respectively. In the skin, aids in the differentiation of keratinocytes in the epidermis. The protein is Zinc transporter ZIP2 of Homo sapiens (Human).